Here is a 1067-residue protein sequence, read N- to C-terminus: Carbamoyl phosphate synthase large chain (1067 aa).

Positions 1–401 (MPLNKDIKKV…AFLKGIRSLE (401 aa)) are carboxyphosphate synthetic domain. The ATP site is built by arginine 129, arginine 169, glycine 175, glycine 176, lysine 208, valine 210, glutamate 215, glycine 241, isoleucine 242, histidine 243, glutamine 284, and glutamate 298. The 195-residue stretch at 133–327 (RDMMNRINQP…IAKVAAKIAL (195 aa)) folds into the ATP-grasp 1 domain. Residues glutamine 284, glutamate 298, and asparagine 300 each contribute to the Mg(2+) site. Mn(2+)-binding residues include glutamine 284, glutamate 298, and asparagine 300. The tract at residues 402 to 549 (IGKYSLEHKK…YSTYEQYDEV (148 aa)) is oligomerization domain. The tract at residues 550 to 932 (VVSDNKKVVV…ALYKGFVGAS (383 aa)) is carbamoyl phosphate synthetic domain. The region spanning 674–864 (DDLLERLNIA…IVDIATRIML (191 aa)) is the ATP-grasp 2 domain. ATP-binding residues include arginine 710, lysine 749, leucine 751, glutamate 755, glycine 780, valine 781, histidine 782, serine 783, glutamine 823, and glutamate 835. The Mg(2+) site is built by glutamine 823, glutamate 835, and asparagine 837. 3 residues coordinate Mn(2+): glutamine 823, glutamate 835, and asparagine 837. The MGS-like domain maps to 933 to 1067 (MYTGDKGKTI…NRELEVFNLI (135 aa)). Residues 933–1067 (MYTGDKGKTI…NRELEVFNLI (135 aa)) form an allosteric domain region.

This sequence belongs to the CarB family. In terms of assembly, composed of two chains; the small (or glutamine) chain promotes the hydrolysis of glutamine to ammonia, which is used by the large (or ammonia) chain to synthesize carbamoyl phosphate. Tetramer of heterodimers (alpha,beta)4. Mg(2+) serves as cofactor. Requires Mn(2+) as cofactor.

It carries out the reaction hydrogencarbonate + L-glutamine + 2 ATP + H2O = carbamoyl phosphate + L-glutamate + 2 ADP + phosphate + 2 H(+). The enzyme catalyses hydrogencarbonate + NH4(+) + 2 ATP = carbamoyl phosphate + 2 ADP + phosphate + 2 H(+). The protein operates within amino-acid biosynthesis; L-arginine biosynthesis; carbamoyl phosphate from bicarbonate: step 1/1. It participates in pyrimidine metabolism; UMP biosynthesis via de novo pathway; (S)-dihydroorotate from bicarbonate: step 1/3. In terms of biological role, large subunit of the glutamine-dependent carbamoyl phosphate synthetase (CPSase). CPSase catalyzes the formation of carbamoyl phosphate from the ammonia moiety of glutamine, carbonate, and phosphate donated by ATP, constituting the first step of 2 biosynthetic pathways, one leading to arginine and/or urea and the other to pyrimidine nucleotides. The large subunit (synthetase) binds the substrates ammonia (free or transferred from glutamine from the small subunit), hydrogencarbonate and ATP and carries out an ATP-coupled ligase reaction, activating hydrogencarbonate by forming carboxy phosphate which reacts with ammonia to form carbamoyl phosphate. The chain is Carbamoyl phosphate synthase large chain from Clostridium perfringens (strain SM101 / Type A).